A 22-amino-acid polypeptide reads, in one-letter code: thr operon leader peptide (22 aa).

Residues 1–22 form a disordered region; it reads MRNISLTTTIITTTDTTGNGAG. The span at 7–22 shows a compositional bias: low complexity; sequence TTTIITTTDTTGNGAG.

It belongs to the thr operon leader peptide family.

This protein is involved in control of the biosynthesis of threonine. This Serratia marcescens protein is thr operon leader peptide.